A 192-amino-acid chain; its full sequence is Ribosomal RNA small subunit methyltransferase G (192 aa).

Residues G59, 111–112 (IE), and R124 contribute to the S-adenosyl-L-methionine site.

The protein belongs to the methyltransferase superfamily. RNA methyltransferase RsmG family.

The protein resides in the cytoplasm. Specifically methylates the N7 position of a guanine in 16S rRNA. The polypeptide is Ribosomal RNA small subunit methyltransferase G (Mycoplasma genitalium (strain ATCC 33530 / DSM 19775 / NCTC 10195 / G37) (Mycoplasmoides genitalium)).